The sequence spans 875 residues: Pyrogallol hydroxytransferase large subunit (875 aa).

The segment at 82-104 (RKSFDPNGERNPQLRGAGLSKQD) is disordered. Ser-175 provides a ligand contact to Mo-bis(molybdopterin guanine dinucleotide).

The protein belongs to the prokaryotic molybdopterin-containing oxidoreductase family. Heterodimer of a large and a small subunit. It depends on Mo-bis(molybdopterin guanine dinucleotide) as a cofactor.

It carries out the reaction 1,2,3,5-tetrahydroxybenzene + 1,2,3-trihydroxybenzene = 1,2,3,5-tetrahydroxybenzene + 1,3,5-trihydroxybenzene. Isomerization of pyrogallol to phloroglucin. This chain is Pyrogallol hydroxytransferase large subunit (athL), found in Pelobacter acidigallici.